Here is a 282-residue protein sequence, read N- to C-terminus: Putative peroxisomal biogenesis factor 19 (282 aa).

Positions 73-95 are disordered; the sequence is QEEAMKKAGADPSEGEGEQPLDP. A Cysteine methyl ester modification is found at C279. C279 is lipidated: S-farnesyl cysteine. Residues 280–282 constitute a propeptide, removed in mature form; the sequence is SIM.

Belongs to the peroxin-19 family.

Its subcellular location is the peroxisome. This is Putative peroxisomal biogenesis factor 19 (prx-19) from Caenorhabditis elegans.